The chain runs to 908 residues: Protein translocase subunit SecA (908 aa).

ATP contacts are provided by residues Q90, 108-112, and D503; that span reads GEGKT. Low complexity predominate over residues 846-864; that stretch reads AAAAEAPVAPAPQPAAAAP. The disordered stretch occupies residues 846–884; that stretch reads AAAAEAPVAPAPQPAAAAPQPTPELVGAEAGEPDPAAWG. The Zn(2+) site is built by C892, C894, C903, and H904.

It belongs to the SecA family. Monomer and homodimer. Part of the essential Sec protein translocation apparatus which comprises SecA, SecYEG and auxiliary proteins SecDF-YajC and YidC. The cofactor is Zn(2+).

The protein localises to the cell inner membrane. The protein resides in the cytoplasm. It catalyses the reaction ATP + H2O + cellular proteinSide 1 = ADP + phosphate + cellular proteinSide 2.. In terms of biological role, part of the Sec protein translocase complex. Interacts with the SecYEG preprotein conducting channel. Has a central role in coupling the hydrolysis of ATP to the transfer of proteins into and across the cell membrane, serving both as a receptor for the preprotein-SecB complex and as an ATP-driven molecular motor driving the stepwise translocation of polypeptide chains across the membrane. The sequence is that of Protein translocase subunit SecA from Cereibacter sphaeroides (strain ATCC 17029 / ATH 2.4.9) (Rhodobacter sphaeroides).